Consider the following 185-residue polypeptide: MIDEILFEAEERMTATVEHTREDLTTIRTGRANPAMFNGVMAEYYGVPTPITQMSGITVPEPRMLLIKPYEMSSMQVIENAIRNSDLGVNPTNDGQVLRVTIPQLTEERRKDMVKLAKGKGEDGKIAIRNIRRKGMDQLKKLQKDGDAGEDEVQAAEKELDKVTAGFVAQVDEVVARKEKELMEV.

This sequence belongs to the RRF family.

It is found in the cytoplasm. Responsible for the release of ribosomes from messenger RNA at the termination of protein biosynthesis. May increase the efficiency of translation by recycling ribosomes from one round of translation to another. This chain is Ribosome-recycling factor, found in Corynebacterium glutamicum (strain ATCC 13032 / DSM 20300 / JCM 1318 / BCRC 11384 / CCUG 27702 / LMG 3730 / NBRC 12168 / NCIMB 10025 / NRRL B-2784 / 534).